A 346-amino-acid polypeptide reads, in one-letter code: Annexin A1 (346 aa).

Residue Ala2 is modified to N-acetylalanine. Ser5 is subject to Phosphoserine; by TRPM7. Gln19 participates in a covalent cross-link: Isoglutamyl lysine isopeptide (Gln-Lys) (interchain with K-?). A Phosphotyrosine; by EGFR modification is found at Tyr21. Ser34 and Ser37 each carry phosphoserine. Thr41 bears the Phosphothreonine mark. Annexin repeat units lie at residues 42 to 113 (FNPS…ALLK), 114 to 185 (TPAQ…SLAK), 197 to 269 (DLAD…VIVK), and 273 to 344 (SQPM…ALCG). Lys58 bears the N6-acetyllysine mark. Ca(2+) is bound by residues Gly59, Val60, Glu62, Lys97, Leu100, Glu105, Met127, Gly129, Gly131, Thr132, and Glu134. Thr136 is subject to Phosphothreonine. Residues Asp171, Gly210, and Arg213 each coordinate Ca(2+). Lys214 is covalently cross-linked (Glycyl lysine isopeptide (Lys-Gly) (interchain with G-Cter in SUMO1); alternate). A Glycyl lysine isopeptide (Lys-Gly) (interchain with G-Cter in SUMO2); alternate cross-link involves residue Lys214. A Ca(2+)-binding site is contributed by Gly215. Lys239 carries the N6-acetyllysine modification. Residues Asp253, Glu255, and Leu256 each coordinate Ca(2+). Lys257 is covalently cross-linked (Glycyl lysine isopeptide (Lys-Gly) (interchain with G-Cter in SUMO1)). Glu261, Met286, Gly288, and Gly290 together coordinate Ca(2+). The residue at position 312 (Lys312) is an N6-acetyllysine. A disulfide bridge connects residues Cys324 and Cys343. Residues Leu328, Glu330, and Thr331 each coordinate Ca(2+). Lys332 participates in a covalent cross-link: Glycyl lysine isopeptide (Lys-Gly) (interchain with G-Cter in SUMO1). Ca(2+) is bound at residue Glu336.

This sequence belongs to the annexin family. As to quaternary structure, homodimer; non-covalently linked. Homodimer; linked by transglutamylation. Homodimers linked by transglutamylation are observed in placenta, but not in other tissues. Interacts with S100A11. Heterotetramer, formed by two molecules each of S100A11 and ANXA1. Interacts with DYSF. Interacts with EGFR. Phosphorylated by protein kinase C, EGFR and TRPM7. Phosphorylated in response to EGF treatment. In terms of processing, sumoylated. Post-translationally, proteolytically cleaved by cathepsin CTSG to release the active N-terminal peptide Ac2-26. In terms of tissue distribution, detected on surface epithelia and mucosal glands in nasal cavity, trachea, bronchi and bronchioles. Detected in blood vessel endothelial cells. Detected in neutrophils (at protein level).

It is found in the nucleus. The protein localises to the cytoplasm. The protein resides in the cell projection. Its subcellular location is the cilium. It localises to the basolateral cell membrane. It is found in the lateral cell membrane. The protein localises to the cell membrane. The protein resides in the apical cell membrane. Its subcellular location is the membrane. It localises to the endosome membrane. It is found in the secreted. The protein localises to the extracellular space. The protein resides in the early endosome. Its subcellular location is the cytoplasmic vesicle membrane. It localises to the extracellular exosome. It is found in the cytoplasmic vesicle. The protein localises to the secretory vesicle lumen. The protein resides in the phagocytic cup. Functionally, plays important roles in the innate immune response as effector of glucocorticoid-mediated responses and regulator of the inflammatory process. Has anti-inflammatory activity. Plays a role in glucocorticoid-mediated down-regulation of the early phase of the inflammatory response. Contributes to the adaptive immune response by enhancing signaling cascades that are triggered by T-cell activation, regulates differentiation and proliferation of activated T-cells. Promotes the differentiation of T-cells into Th1 cells and negatively regulates differentiation into Th2 cells. Has no effect on unstimulated T-cells. Negatively regulates hormone exocytosis via activation of the formyl peptide receptors and reorganization of the actin cytoskeleton. Has high affinity for Ca(2+) and can bind up to eight Ca(2+) ions. Displays Ca(2+)-dependent binding to phospholipid membranes. Plays a role in the formation of phagocytic cups and phagosomes. Plays a role in phagocytosis by mediating the Ca(2+)-dependent interaction between phagosomes and the actin cytoskeleton. Functions at least in part by activating the formyl peptide receptors and downstream signaling cascades. Promotes chemotaxis of granulocytes and monocytes via activation of the formyl peptide receptors. Promotes rearrangement of the actin cytoskeleton, cell polarization and cell migration. Promotes resolution of inflammation and wound healing. Acts via neutrophil N-formyl peptide receptors to enhance the release of CXCL2. The sequence is that of Annexin A1 (ANXA1) from Bos taurus (Bovine).